The following is a 172-amino-acid chain: Allergen Bos d 2 (172 aa).

Positions 1 to 16 (MKAVFLTLLFGLVCTA) are cleaved as a signal peptide. Glutamine 17 bears the Pyrrolidone carboxylic acid mark. 2 disulfides stabilise this stretch: cysteine 60-cysteine 64 and cysteine 79-cysteine 170.

Belongs to the calycin superfamily. Lipocalin family. As to expression, found exclusively in skin. Produced in sweat glands and transported to the skin surface.

The protein resides in the secreted. In terms of biological role, probable pheromone carrier. This Bos taurus (Bovine) protein is Allergen Bos d 2.